The following is a 166-amino-acid chain: Phosphodiesterase MJ0936 (166 aa).

Residues aspartate 8, histidine 10, aspartate 36, asparagine 59, histidine 97, histidine 120, and histidine 122 each contribute to the Mn(2+) site. Ni(2+) is bound by residues aspartate 8, histidine 10, aspartate 36, asparagine 59, histidine 97, histidine 120, and histidine 122.

Belongs to the metallophosphoesterase superfamily. YfcE family. In terms of assembly, monomer. It depends on Ni(2+) as a cofactor. Mn(2+) is required as a cofactor.

Its activity is regulated as follows. Competitively inhibited by phosphate. Its function is as follows. Shows phosphodiesterase activity. Hydrolyzes phosphodiesters bonds in the artificial chromogenic substrates bis-p-nitrophenyl phosphate (bis-pNPP), and less efficiently thymidine 5'-monophosphate p-nitrophenyl ester (pNP-TMP) and p-nitrophenylphosphorylcholine (pNPPC). No catalytic activity was found toward cAMP or cGMP, nucleotides or phospholipase substrates such as phosphatidylcholine. The physiological substrate is unknown. This is Phosphodiesterase MJ0936 from Methanocaldococcus jannaschii (strain ATCC 43067 / DSM 2661 / JAL-1 / JCM 10045 / NBRC 100440) (Methanococcus jannaschii).